Consider the following 356-residue polypeptide: MITRSIGIARRSNSINCIVGSNTSTSYSLDESTKRWISTSTKQPMSLIPTASSLVASSPPNLKPYLQLMRVDKPIGTWLLYWPCTWSIAMATPAGQLPSIYMLSLFGAGAFLMRSAGCVINDLWDKDFDKKVERTKLRPLACGSLTEKQAIGLLAGLLSSSLAILLQLNWYSVAVGASSMALVVGYPLAKRFTYWPQFVLGLTFNWGALLGWCALKGDLSSSAPFWMYAAALQWTLIYDTIYAHQDKADDIMIGVKSTALRLGADTKKWLSAFGVGTVASLTACGIASDQTWPYYVALAATTAQLGWQVGTVDIDNGSDCWDKFKSNSWMGIILFSGIVASTLLKEVFQILIRPYH.

A mitochondrion-targeting transit peptide spans 1 to 44 (MITRSIGIARRSNSINCIVGSNTSTSYSLDESTKRWISTSTKQP). Transmembrane regions (helical) follow at residues 71–91 (VDKP…IAMA), 93–113 (PAGQ…AFLM), 150–170 (AIGL…QLNW), 195–215 (WPQF…WCAL), 269–289 (WLSA…IASD), and 332–352 (IILF…QILI).

Belongs to the UbiA prenyltransferase family. Requires Mg(2+) as cofactor.

It is found in the mitochondrion inner membrane. The catalysed reaction is an all-trans-polyprenyl diphosphate + 4-hydroxybenzoate = a 4-hydroxy-3-(all-trans-polyprenyl)benzoate + diphosphate. The protein operates within cofactor biosynthesis; ubiquinone biosynthesis. Its function is as follows. Catalyzes the prenylation of para-hydroxybenzoate (PHB) with an all-trans polyprenyl group. Mediates the second step in the final reaction sequence of coenzyme Q (CoQ) biosynthesis, which is the condensation of the polyisoprenoid side chain with PHB, generating the first membrane-bound Q intermediate. In Caenorhabditis elegans, this protein is 4-hydroxybenzoate polyprenyltransferase, mitochondrial (coq-2).